The following is a 565-amino-acid chain: Thiol:disulfide interchange protein DsbD (565 aa).

The signal sequence occupies residues 1–19; that stretch reads MAQRIFTLILLLCSTSVFA. 2 disulfide bridges follow: Cys122/Cys128 and Cys182/Cys304. Transmembrane regions (helical) follow at residues 163–183, 208–228, 243–263, 296–316, 323–343, 365–385, and 386–406; these read LPFSALWALLIGIGIAFTPCV, LLTFIYVQGMALTYTALGLVV, YVLIGLAIVFTLLAMSMFGLF, IAGLICSPCTTAPLSAILLYI, WLGGGTLYLYALGMGLPLMLI, FGFVILALPVFLLERVIGDIW, and GLRLWSALGVAFFGGAFITSL. A Thioredoxin domain is found at 434-565; the sequence is WAFGATHTAQ…FSAHLRDRQP (132 aa). Residues Cys480 and Cys483 are joined by a disulfide bond.

This sequence belongs to the thioredoxin family. DsbD subfamily.

The protein localises to the cell inner membrane. It carries out the reaction [protein]-dithiol + NAD(+) = [protein]-disulfide + NADH + H(+). It catalyses the reaction [protein]-dithiol + NADP(+) = [protein]-disulfide + NADPH + H(+). Required to facilitate the formation of correct disulfide bonds in some periplasmic proteins and for the assembly of the periplasmic c-type cytochromes. Acts by transferring electrons from cytoplasmic thioredoxin to the periplasm. This transfer involves a cascade of disulfide bond formation and reduction steps. This Shigella dysenteriae serotype 1 (strain Sd197) protein is Thiol:disulfide interchange protein DsbD.